The primary structure comprises 325 residues: Alkanal monooxygenase beta chain (325 aa).

This sequence belongs to the bacterial luciferase oxidoreductase family. As to quaternary structure, heterodimer of an alpha and a beta chain.

The catalysed reaction is a long-chain fatty aldehyde + FMNH2 + O2 = a long-chain fatty acid + hnu + FMN + H2O + 2 H(+). Light-emitting reaction in luminous bacteria. The specific role of the beta subunit is unknown, but it is absolutely required for bioluminescence activity. The protein is Alkanal monooxygenase beta chain (luxB) of Photobacterium leiognathi.